A 269-amino-acid chain; its full sequence is Cleavage and polyadenylation specificity factor subunit 4 (269 aa).

C3H1-type zinc fingers lie at residues 35–61, 62–89, 90–117, 118–142, and 143–169; these read KSGA…RHIS, GEKT…HEYD, MTKM…HIDP, ESKI…RHRH, and TRRV…HPRF. The disordered stretch occupies residues 173–199; it reads MGTTEQPPLPQQTQPPAKQSNNPPLQR. Residues serine 200, serine 202, and serine 212 each carry the phosphoserine modification. A CCHC-type zinc finger spans residues 243–260; it reads VTCYKCGEKGHYANRCTK. Serine 267 is subject to Phosphoserine.

This sequence belongs to the CPSF4/YTH1 family. Component of the cleavage and polyadenylation specificity factor (CPSF) complex, composed of CPSF1, CPSF2, CPSF3, CPSF4 and FIP1L1. Interacts with FIP1L1. As to quaternary structure, (Microbial infection) Interacts with influenza A virus NS1 blocks processing of pre-mRNAs, thereby preventing nuclear export of host cell mRNAs.

The protein resides in the nucleus. Component of the cleavage and polyadenylation specificity factor (CPSF) complex that play a key role in pre-mRNA 3'-end formation, recognizing the AAUAAA signal sequence and interacting with poly(A) polymerase and other factors to bring about cleavage and poly(A) addition. CPSF4 binds RNA polymers with a preference for poly(U). This chain is Cleavage and polyadenylation specificity factor subunit 4 (CPSF4), found in Homo sapiens (Human).